The following is a 259-amino-acid chain: Glandular kallikrein-10 (259 aa).

The first 18 residues, 1 to 18 (MWFLILFLALSLGGIDAA), serve as a signal peptide directing secretion. Residues 19 to 24 (PPGQSR) constitute a propeptide, activation peptide. In terms of domain architecture, Peptidase S1 spans 25–256 (IVGGYKCEKN…FTSWIKEVMK (232 aa)). 5 cysteine pairs are disulfide-bonded: Cys-31–Cys-171, Cys-48–Cys-64, Cys-150–Cys-217, Cys-182–Cys-196, and Cys-207–Cys-232. His-63 functions as the Charge relay system in the catalytic mechanism. N-linked (GlcNAc...) asparagine glycans are attached at residues Asn-91 and Asn-106. Asp-118 serves as the catalytic Charge relay system. Ser-211 serves as the catalytic Charge relay system.

Belongs to the peptidase S1 family. Kallikrein subfamily. Heterodimer of a light chain and heavy chain linked by a disulfide bond. In terms of processing, probably N- and O-glycosylated. Kidney and submandibular gland, where it is found in the granular convoluted tubule and striated duct cells. It is likely that the enzyme is mainly synthesized in the granular convoluted tubules and then transferred to other tissues by release into the vasculature or interstitial space.

The catalysed reaction is Preferential cleavage of Arg-|-Xaa bonds in small molecule substrates. Highly selective action to release kallidin (lysyl-bradykinin) from kininogen involves hydrolysis of Met-|-Xaa or Leu-|-Xaa.. Functionally, glandular kallikreins cleave Met-Lys and Arg-Ser bonds in kininogen to release Lys-bradykinin. This protein may be involved in the regulation of renal function. This Rattus norvegicus (Rat) protein is Glandular kallikrein-10 (Klk10).